Consider the following 539-residue polypeptide: T-complex protein 1 subunit delta (539 aa).

The segment at Met1 to Lys29 is disordered. Residue Arg19 is modified to Omega-N-methylarginine. Lys21 bears the N6-acetyllysine mark. Position 36 is a phosphoserine (Ser36). Gly53 contacts ADP. Gly53 contacts ATP. Asp104 serves as a coordination point for Mg(2+). ADP is bound by residues Gly105, Thr106, Thr107, Ser108, Asn172, Ser173, and Lys174. Residues Gly105 and Thr106 each coordinate ATP. Lys174 is a binding site for ATP. Residues Ser184 and Ser202 each carry the phosphoserine modification. Residues Lys288, Lys302, Lys319, and Lys326 each carry the N6-acetyllysine modification. Residue Gly425 participates in ADP binding. At Ser444 the chain carries Phosphoserine. Residue Gln510 participates in ADP binding.

It belongs to the TCP-1 chaperonin family. Component of the chaperonin-containing T-complex (TRiC), a hexadecamer composed of two identical back-to-back stacked rings enclosing a protein folding chamber. Each ring is made up of eight different subunits: TCP1/CCT1, CCT2, CCT3, CCT4, CCT5, CCT6A/CCT6, CCT7, CCT8. Interacts with PACRG. Interacts with DNAAF4. Interacts with DLEC1.

It is found in the cytoplasm. The protein resides in the melanosome. The protein localises to the cytoskeleton. Its subcellular location is the microtubule organizing center. It localises to the centrosome. It is found in the cilium basal body. It carries out the reaction ATP + H2O = ADP + phosphate + H(+). Component of the chaperonin-containing T-complex (TRiC), a molecular chaperone complex that assists the folding of actin, tubulin and other proteins upon ATP hydrolysis. The TRiC complex mediates the folding of WRAP53/TCAB1, thereby regulating telomere maintenance. As part of the TRiC complex may play a role in the assembly of BBSome, a complex involved in ciliogenesis regulating transports vesicles to the cilia. This Homo sapiens (Human) protein is T-complex protein 1 subunit delta (CCT4).